The primary structure comprises 244 residues: Ribosomal RNA small subunit methyltransferase G (244 aa).

Residues glycine 79, phenylalanine 84, 130 to 131 (AE), and arginine 150 each bind S-adenosyl-L-methionine. The tract at residues 221-244 (KKPSPKRYPRKPGTPAKQPLTAPM) is disordered.

Belongs to the methyltransferase superfamily. RNA methyltransferase RsmG family.

The protein resides in the cytoplasm. In terms of biological role, specifically methylates the N7 position of a guanine in 16S rRNA. The polypeptide is Ribosomal RNA small subunit methyltransferase G (Lactiplantibacillus plantarum (strain ATCC BAA-793 / NCIMB 8826 / WCFS1) (Lactobacillus plantarum)).